The following is a 130-amino-acid chain: Small ribosomal subunit protein uS9 (130 aa).

Belongs to the universal ribosomal protein uS9 family.

This chain is Small ribosomal subunit protein uS9, found in Halorhodospira halophila (strain DSM 244 / SL1) (Ectothiorhodospira halophila (strain DSM 244 / SL1)).